The primary structure comprises 407 residues: Phosphopentomutase (407 aa).

Mn(2+)-binding residues include Asp-10, Asp-306, His-311, Asp-347, His-348, and His-359.

Belongs to the phosphopentomutase family. Requires Mn(2+) as cofactor.

The protein localises to the cytoplasm. The enzyme catalyses 2-deoxy-alpha-D-ribose 1-phosphate = 2-deoxy-D-ribose 5-phosphate. It catalyses the reaction alpha-D-ribose 1-phosphate = D-ribose 5-phosphate. It functions in the pathway carbohydrate degradation; 2-deoxy-D-ribose 1-phosphate degradation; D-glyceraldehyde 3-phosphate and acetaldehyde from 2-deoxy-alpha-D-ribose 1-phosphate: step 1/2. Its function is as follows. Isomerase that catalyzes the conversion of deoxy-ribose 1-phosphate (dRib-1-P) and ribose 1-phosphate (Rib-1-P) to deoxy-ribose 5-phosphate (dRib-5-P) and ribose 5-phosphate (Rib-5-P), respectively. This chain is Phosphopentomutase, found in Shigella boydii serotype 18 (strain CDC 3083-94 / BS512).